A 902-amino-acid polypeptide reads, in one-letter code: Nuclear factor of activated T-cells, cytoplasmic 4 (902 aa).

Disordered stretches follow at residues 16–180 (VFGE…SSWS) and 208–369 (RFGL…GGSR). Residues 50–81 (EPPPYGAAPIGIPRPPPPRPGMHSPPPRPAPS) show a composition bias toward pro residues. Gly residues predominate over residues 96-109 (GGPGGGAGGAGGGR). The segment at 114–119 (PSIRIT) is calcineurin-binding. Residues 151–165 (GFGGYREAGGQGGGA) are compositionally biased toward gly residues. Over residues 166 to 180 (FFSPSPGSSSLSSWS) the composition is skewed to low complexity. Phosphoserine; by MAPK7 and MAPK14 occurs at positions 168 and 170. Phosphoserine; by MAPK8 and MAPK9 is present on residues Ser213 and Ser217. The stretch at 213 to 229 (SPLPSPRASPRPWTPED) is one SP 1 repeat. Positions 213 to 293 (SPLPSPRASP…LSRRGSLGEE (81 aa)) are 2 approximate SP repeats. 2 stretches are compositionally biased toward pro residues: residues 215–227 (LPSP…PWTP) and 254–263 (GPTPASPRPA). A Nuclear localization signal motif is present at residues 268–270 (KRR). The segment covering 272–288 (SSSGTPSSASPALSRRG) has biased composition (low complexity). The SP 2; approximate repeat unit spans residues 277–293 (PSSASPALSRRGSLGEE). Residues Ser289 and Ser344 each carry the phosphoserine; by RPS6KA3 modification. An RHD domain is found at 401 to 582 (SALPPLDWPL…VPIECSQRSA (182 aa)). The DNA-binding element occupies 430–437 (RAHYETEG). The 98-residue stretch at 586–683 (PQVEAYSPSA…KRSPTQSFRF (98 aa)) folds into the IPT/TIG domain. The Nuclear localization signal signature appears at 672–674 (RRK). Residue Lys689 forms a Glycyl lysine isopeptide (Lys-Gly) (interchain with G-Cter in SUMO2) linkage. Residues 791-870 (PYGGRGSSFS…GGYSSGFRDS (80 aa)) form a disordered region. The segment covering 805–824 (FSPPAPFRPPPLPASPPLEG) has biased composition (pro residues).

As to quaternary structure, member of the multicomponent NFATC transcription complex that consists of at least two components, a pre-existing cytoplasmic component NFATC2 and an inducible nuclear component NFATC1. Other NFAT proteins, such as NFATC3, or members of the activating protein-1 (AP-1) family and MAF can also bind the complex. NFAT proteins can bind DNA as monomers or dimers. Component of a promoter-binding complex composed of STAT3, NFATC3 and NFATC4; complex formation is enhanced by calcineurin. Interacts with CREBBP; this interaction potentiates transcription activation. Interacts with MAPK8/JNK1 and MAPK9/JNK2. Interacts with GATA4 (via the second Zn finger). Interacts (via N-terminus) with IRAK1 (via C-terminus). Interacts with RPS6KA3. Interacts with HOMER1, HOMER2 and HOMER3; this interaction competes with calcineurin/PPP3CA-binding and hence prevents NFATC4 dephosphorylation and activation. Interacts with ESR1 and ESR2; this interaction decreases NFATC4 transcriptional activity. Interacts with MTOR and MAPK7/ERK5. Interacts with TRIM17; this interaction prevents NFATC3 nuclear localization. Interacts with TCF25 (via C-terminus); the interaction leads to suppression of NFATC4 transcription factor activity and is reduced following stimulation with angiotensin-2. In terms of processing, phosphorylated by NFATC-kinases; dephosphorylated by calcineurin/PPP3CA. Phosphorylated on Ser-168 and Ser-170 by MTOR, IRAK1, MAPK7/ERK5 and MAPK14/p38, on Ser-213 and Ser-217 by MAPK8/JNK1 and MAPK9/JNK2, and on Ser-289 and Ser-344 by RPS6KA3. Phosphorylated by GSK3B. Phosphorylation by GSK3B markedly increases NFATC4 ubiquitination. Phosphorylation at Ser-168 and Ser-170 is stimulated by UV irradiation. Phosphorylation determines subcellular location: the hyperphosphorylated protein is cytosolic, while the dephosphorylated form is targeted to the nucleus. Post-translationally, ubiquitinated, leading to degradation by the proteasome. Ubiquitination may be stimulated by GSK3B-dependent phosphorylation. Polyubiquitin linkage mainly occurs through 'Lys-48'. Widely expressed, with high levels in placenta, lung, kidney, testis and ovary. Weakly expressed in spleen and thymus. In the hippocampus, expressed in the granular layer of the dentate gyrus, in the pyramidal neurons of CA3 region, and in the hippocampal fissure. Expressed in the heart (at protein level).

Its subcellular location is the cytoplasm. It is found in the nucleus. Transcriptional activity may be repressed by ESR1 and ESR2. Its function is as follows. Ca(2+)-regulated transcription factor that is involved in several processes, including the development and function of the immune, cardiovascular, musculoskeletal, and nervous systems. Involved in T-cell activation, stimulating the transcription of cytokine genes, including that of IL2 and IL4. Along with NFATC3, involved in embryonic heart development. Following JAK/STAT signaling activation and as part of a complex with NFATC3 and STAT3, binds to the alpha-beta E4 promoter region of CRYAB and activates transcription in cardiomyocytes. Involved in mitochondrial energy metabolism required for cardiac morphogenesis and function. Transactivates many genes involved in the cardiovascular system, including AGTR2, NPPB/BNP (in synergy with GATA4), NPPA/ANP/ANF and MYH7/beta-MHC. Involved in the regulation of adult hippocampal neurogenesis. Involved in BDNF-driven pro-survival signaling in hippocampal adult-born neurons. Involved in the formation of long-term spatial memory and long-term potentiation. In cochlear nucleus neurons, may play a role in deafferentation-induced apoptosis during the developmental critical period, when auditory neurons depend on afferent input for survival. Binds to and activates the BACE1/Beta-secretase 1 promoter, hence may regulate the proteolytic processing of the amyloid precursor protein (APP). Plays a role in adipocyte differentiation. May be involved in myoblast differentiation into myotubes. Binds the consensus DNA sequence 5'-GGAAAAT-3'. In the presence of CREBBP, activates TNF transcription. Binds to PPARG gene promoter and regulates its activity. Binds to PPARG and REG3G gene promoters. The sequence is that of Nuclear factor of activated T-cells, cytoplasmic 4 (NFATC4) from Homo sapiens (Human).